An 895-amino-acid polypeptide reads, in one-letter code: Eukaryotic translation initiation factor 3 subunit C (895 aa).

Residues 1-108 (MSGFFRKVGD…DSDSEEEVKK (108 aa)) form a disordered region. Acidic residues-rich tracts occupy residues 11–31 (SDSE…ESGD) and 52–75 (DDSD…DDDN). Positions 638–812 (FHMHINLELL…NVVSFHRLEL (175 aa)) constitute a PCI domain. The segment covering 838–860 (DAKLGEGKEQRSGAGGERGDREG) has biased composition (basic and acidic residues). Residues 838-895 (DAKLGEGKEQRSGAGGERGDREGGQPGGRRERRGGSAARGRGRGRGRAQQFQALGQKV) form a disordered region. The span at 884–895 (RAQQFQALGQKV) shows a compositional bias: low complexity.

The protein belongs to the eIF-3 subunit C family. In terms of assembly, component of the eukaryotic translation initiation factor 3 (eIF-3) complex.

It is found in the cytoplasm. Its function is as follows. Component of the eukaryotic translation initiation factor 3 (eIF-3) complex, which is involved in protein synthesis of a specialized repertoire of mRNAs and, together with other initiation factors, stimulates binding of mRNA and methionyl-tRNAi to the 40S ribosome. The eIF-3 complex specifically targets and initiates translation of a subset of mRNAs involved in cell proliferation. The sequence is that of Eukaryotic translation initiation factor 3 subunit C from Mycosarcoma maydis (Corn smut fungus).